We begin with the raw amino-acid sequence, 619 residues long: UvrABC system protein C (619 aa).

Residues 20-98 (TAPGVYRMYA…IKSLSPRYNV (79 aa)) enclose the GIY-YIG domain. One can recognise a UVR domain in the interval 207–242 (DQLGEEIMHSMQQASEALEFERAARLRDLLSSLRSM).

Belongs to the UvrC family. In terms of assembly, interacts with UvrB in an incision complex.

It localises to the cytoplasm. In terms of biological role, the UvrABC repair system catalyzes the recognition and processing of DNA lesions. UvrC both incises the 5' and 3' sides of the lesion. The N-terminal half is responsible for the 3' incision and the C-terminal half is responsible for the 5' incision. The protein is UvrABC system protein C of Xanthomonas euvesicatoria pv. vesicatoria (strain 85-10) (Xanthomonas campestris pv. vesicatoria).